Here is a 513-residue protein sequence, read N- to C-terminus: Protein CYCLOPS (513 aa).

The segment at 327-435 (QIHGGTASGE…ERSRKMAEAK (109 aa)) is disordered. Low complexity predominate over residues 334–347 (SGEPSQSESSAAAP). A compositionally biased stretch (polar residues) spans 359–381 (PSNSSQTLCDSSWKQVGESTQNR). Residues 384–396 (GVREQIMDNLKDD) show a composition bias toward basic and acidic residues. 2 short sequence motifs (nuclear localization signal) span residues 397 to 401 (RKRKR) and 421 to 424 (KKRR). Residues 447–513 (MQAVMKRCEN…ERLLSETGKI (67 aa)) adopt a coiled-coil conformation.

This sequence belongs to the CYCLOPS family.

The protein localises to the nucleus. Involved symbiotic signaling. Required for root infection by symbiotic rhizobia, infection thread (IT) formation, and nodule development. Required for symbiosome formation (i.e. the release of the bacteria from the ITs) and subsequent symbiosome development. Involved in arbuscular mycorrhizal (AM) symbiosis. The protein is Protein CYCLOPS of Pisum sativum (Garden pea).